We begin with the raw amino-acid sequence, 318 residues long: Ribosomal RNA small subunit methyltransferase H (318 aa).

S-adenosyl-L-methionine contacts are provided by residues 33–35 (GGH), Asp53, Phe80, Asp101, and Gln108.

It belongs to the methyltransferase superfamily. RsmH family.

Its subcellular location is the cytoplasm. The catalysed reaction is cytidine(1402) in 16S rRNA + S-adenosyl-L-methionine = N(4)-methylcytidine(1402) in 16S rRNA + S-adenosyl-L-homocysteine + H(+). Its function is as follows. Specifically methylates the N4 position of cytidine in position 1402 (C1402) of 16S rRNA. This chain is Ribosomal RNA small subunit methyltransferase H, found in Symbiobacterium thermophilum (strain DSM 24528 / JCM 14929 / IAM 14863 / T).